The sequence spans 315 residues: Olfactory receptor 4A8 (315 aa).

The Extracellular portion of the chain corresponds to 1-24 (MRQNNNITEFVLLGFSQYPDVQNA). Residue asparagine 6 is glycosylated (N-linked (GlcNAc...) asparagine). The helical transmembrane segment at 25–45 (LFVMFLLIYIVTMVGNLLIVV) threads the bilayer. At 46–57 (SIIASPFLGSPV) the chain is on the cytoplasmic side. The helical transmembrane segment at 58 to 80 (YFFLACLSFIDAVYSTTISPVLI) threads the bilayer. The Extracellular segment spans residues 81 to 95 (VDLLCDKKTISFPAC). A disulfide bridge links cysteine 95 with cysteine 177. A helical transmembrane segment spans residues 96–116 (MGQLFIEHLFGDTDVFLLVVM). The Cytoplasmic segment spans residues 117–139 (AYDRYVATCKPLRYLTIMNRQVC). The chain crosses the membrane as a helical span at residues 140-160 (ILLLVVAVTGGFLHSVFQILV). Residues 161–193 (VYSLPFCGPNVIYHFFCNIYPLLDLECTDTYFV) are Extracellular-facing. The chain crosses the membrane as a helical span at residues 194–214 (GLAVVFNGGAICMVIFTLLLI). The Cytoplasmic portion of the chain corresponds to 215–235 (SYGVILNSLKTYSPEGRHKAP). Residues 236-256 (FICSSHFIMVILFFVPCIFLY) form a helical membrane-spanning segment. Residues 257-266 (VRPVSNFPID) are Extracellular-facing. Residues 267–287 (KFLTVFYSVITPKLNPFIYML) form a helical membrane-spanning segment. At 288–315 (RNSEMRNAIENLLGYQSGKTGFRCSKLN) the chain is on the cytoplasmic side.

Belongs to the G-protein coupled receptor 1 family.

Its subcellular location is the cell membrane. Odorant receptor. In Homo sapiens (Human), this protein is Olfactory receptor 4A8 (OR4A8).